The following is a 454-amino-acid chain: Jacalin-related lectin 37 (454 aa).

The region spanning 295–438 (SRFTPPRGIQ…LTALGVHFSP (144 aa)) is the Jacalin-type lectin domain.

This sequence belongs to the jacalin lectin family.

The sequence is that of Jacalin-related lectin 37 (JAL37) from Arabidopsis thaliana (Mouse-ear cress).